We begin with the raw amino-acid sequence, 86 residues long: Large ribosomal subunit protein uL23 (86 aa).

Belongs to the universal ribosomal protein uL23 family. As to quaternary structure, part of the 50S ribosomal subunit. Contacts protein L29.

Its function is as follows. Binds to 23S rRNA. One of the proteins that surrounds the polypeptide exit tunnel on the outside of the ribosome. This chain is Large ribosomal subunit protein uL23, found in Thermococcus onnurineus (strain NA1).